The primary structure comprises 544 residues: CTP synthase (544 aa).

The segment at 1–267 (MAKFVFVTGG…CRQVLDVLSL (267 aa)) is amidoligase domain. Ser13 provides a ligand contact to CTP. Ser13 provides a ligand contact to UTP. Residues 14–19 (SIGKGI) and Asp71 each bind ATP. Asp71 and Glu141 together coordinate Mg(2+). Residues 148 to 150 (DIE), 188 to 193 (KTKPTQ), and Lys224 contribute to the CTP site. Residues 188–193 (KTKPTQ) and Lys224 contribute to the UTP site. In terms of domain architecture, Glutamine amidotransferase type-1 spans 292–534 (KVALVGKYVQ…IQAASQRLPQ (243 aa)). Gly354 contributes to the L-glutamine binding site. Cys381 serves as the catalytic Nucleophile; for glutamine hydrolysis. Residues 382–385 (LGMQ), Glu405, and Arg462 each bind L-glutamine. Catalysis depends on residues His507 and Glu509.

This sequence belongs to the CTP synthase family. In terms of assembly, homotetramer.

It catalyses the reaction UTP + L-glutamine + ATP + H2O = CTP + L-glutamate + ADP + phosphate + 2 H(+). The catalysed reaction is L-glutamine + H2O = L-glutamate + NH4(+). The enzyme catalyses UTP + NH4(+) + ATP = CTP + ADP + phosphate + 2 H(+). The protein operates within pyrimidine metabolism; CTP biosynthesis via de novo pathway; CTP from UDP: step 2/2. Its activity is regulated as follows. Allosterically activated by GTP, when glutamine is the substrate; GTP has no effect on the reaction when ammonia is the substrate. The allosteric effector GTP functions by stabilizing the protein conformation that binds the tetrahedral intermediate(s) formed during glutamine hydrolysis. Inhibited by the product CTP, via allosteric rather than competitive inhibition. Functionally, catalyzes the ATP-dependent amination of UTP to CTP with either L-glutamine or ammonia as the source of nitrogen. Regulates intracellular CTP levels through interactions with the four ribonucleotide triphosphates. This Synechococcus sp. (strain RCC307) protein is CTP synthase.